The sequence spans 332 residues: Large ribosomal subunit protein uL10 (332 aa).

The tract at residues 294–332 (QAAAAPVAVEDNTEEPEEEEEEEEDAAESAAAGLGALFG) is disordered. Acidic residues predominate over residues 304–320 (DNTEEPEEEEEEEEDAA).

It belongs to the universal ribosomal protein uL10 family. As to quaternary structure, part of the 50S ribosomal subunit. Forms part of the ribosomal stalk which helps the ribosome interact with GTP-bound translation factors. Forms a heptameric L10(L12)2(L12)2(L12)2 complex, where L10 forms an elongated spine to which the L12 dimers bind in a sequential fashion.

Its function is as follows. Forms part of the ribosomal stalk, playing a central role in the interaction of the ribosome with GTP-bound translation factors. The sequence is that of Large ribosomal subunit protein uL10 from Methanosphaera stadtmanae (strain ATCC 43021 / DSM 3091 / JCM 11832 / MCB-3).